Here is a 237-residue protein sequence, read N- to C-terminus: Sulfolipid-1 exporter Sap (237 aa).

Helical transmembrane passes span Val-5 to Met-25, Phe-38 to Gly-58, Phe-66 to Leu-86, Val-141 to Leu-161, Ala-171 to Ser-191, and Asp-217 to Leu-237.

It belongs to the peptidoglycolipid addressing protein (GAP) (TC 2.A.116) family.

The protein resides in the cell inner membrane. Functionally, required for the transport across the inner membrane of sulfolipid-1 (SL-1), which is a major cell wall lipid of pathogenic mycobacteria. Could also transport SL1278 (2-palmitoyl-3-(C43)-phthioceranyl-alpha, alpha'-D-trehalose-2'-sulfate), which is the precursor of SL-1. May potentiate SL-1 levels and confer specificity for sulfolipids over structurally similar glycolipids. The protein is Sulfolipid-1 exporter Sap of Mycobacterium tuberculosis (strain ATCC 25618 / H37Rv).